A 229-amino-acid polypeptide reads, in one-letter code: UPF0758 protein Caur_3603 (229 aa).

One can recognise an MPN domain in the interval 105-227 (PIRSPADVAT…YVSLRERGLG (123 aa)). Zn(2+)-binding residues include His176, His178, and Asp189. A JAMM motif motif is present at residues 176-189 (HNHPSGEPTPSMED).

This sequence belongs to the UPF0758 family.

This Chloroflexus aurantiacus (strain ATCC 29366 / DSM 635 / J-10-fl) protein is UPF0758 protein Caur_3603.